The following is an 841-amino-acid chain: Rho guanine nucleotide exchange factor 15 (841 aa).

Disordered regions lie at residues 1 to 179 (MSAQ…QARA), 239 to 261 (RRASPLRTSRSRPHPPSIGHPAV), and 279 to 333 (KPPK…REEE). Polar residues predominate over residues 39 to 53 (NGSSPQELPRNSNDA). Over residues 65-110 (PPAASLKPPALLPPSASRASLDSQTSPDSPSSTPTPSPVSRRSASP) the composition is skewed to low complexity. Ser107 and Ser109 each carry phosphoserine. Positions 111-124 (EPAPRSPVPPPKPS) are enriched in pro residues. A Phosphotyrosine; by EPHB2 modification is found at Tyr353. The DH domain maps to 417–601 (RMQESLFEVV…SKIIERCSAE (185 aa)). The segment at 765-793 (ESSAPAKTEGRSLESRAAPKHLHKTPEGW) is disordered.

In terms of assembly, interacts with EPHB2. Interacts with EPHA4. Phosphorylated on tyrosine residues upon EFNA1 stimulation. EPHB2-dependent phosphorylation at Tyr-353 triggers UBE3A-mediated ubiquitination. In terms of processing, ubiquitinated; UBE3A-mediated ubiquitination and degradation by the proteasome promotes EFNB1-dependent synapse formation. Expressed in the vascular smooth muscle of coronary artery.

The protein localises to the cell projection. It localises to the dendrite. In terms of biological role, specific GEF for RhoA activation. Does not activate RAC1 or CDC42. Regulates vascular smooth muscle contractility. Negatively regulates excitatory synapse development by suppressing the synapse-promoting activity of EPHB2. In Homo sapiens (Human), this protein is Rho guanine nucleotide exchange factor 15 (ARHGEF15).